The following is an 881-amino-acid chain: Alanine--tRNA ligase (881 aa).

Zn(2+) is bound by residues His568, His572, Cys670, and His674.

It belongs to the class-II aminoacyl-tRNA synthetase family. It depends on Zn(2+) as a cofactor.

It is found in the cytoplasm. The enzyme catalyses tRNA(Ala) + L-alanine + ATP = L-alanyl-tRNA(Ala) + AMP + diphosphate. Catalyzes the attachment of alanine to tRNA(Ala) in a two-step reaction: alanine is first activated by ATP to form Ala-AMP and then transferred to the acceptor end of tRNA(Ala). Also edits incorrectly charged Ser-tRNA(Ala) and Gly-tRNA(Ala) via its editing domain. The protein is Alanine--tRNA ligase of Moorella thermoacetica (strain ATCC 39073 / JCM 9320).